The following is a 507-amino-acid chain: Probable cytosol aminopeptidase (507 aa).

Mn(2+)-binding residues include lysine 254 and aspartate 259. The active site involves lysine 266. Mn(2+) is bound by residues aspartate 277, aspartate 336, and glutamate 338. The active site involves arginine 340. Residues 486-507 (PRKAQPKARSAKRSKPVSRTRA) are disordered. Over residues 489 to 507 (AQPKARSAKRSKPVSRTRA) the composition is skewed to basic residues.

It belongs to the peptidase M17 family. Mn(2+) serves as cofactor.

Its subcellular location is the cytoplasm. It carries out the reaction Release of an N-terminal amino acid, Xaa-|-Yaa-, in which Xaa is preferably Leu, but may be other amino acids including Pro although not Arg or Lys, and Yaa may be Pro. Amino acid amides and methyl esters are also readily hydrolyzed, but rates on arylamides are exceedingly low.. It catalyses the reaction Release of an N-terminal amino acid, preferentially leucine, but not glutamic or aspartic acids.. Functionally, presumably involved in the processing and regular turnover of intracellular proteins. Catalyzes the removal of unsubstituted N-terminal amino acids from various peptides. This chain is Probable cytosol aminopeptidase, found in Polaromonas sp. (strain JS666 / ATCC BAA-500).